The sequence spans 247 residues: Probable transcriptional regulatory protein Glov_1245 (247 aa).

It belongs to the TACO1 family.

Its subcellular location is the cytoplasm. The chain is Probable transcriptional regulatory protein Glov_1245 from Trichlorobacter lovleyi (strain ATCC BAA-1151 / DSM 17278 / SZ) (Geobacter lovleyi).